A 393-amino-acid chain; its full sequence is NAD(P)H-quinone oxidoreductase subunit H, chloroplastic (393 aa).

It belongs to the complex I 49 kDa subunit family. In terms of assembly, NDH is composed of at least 16 different subunits, 5 of which are encoded in the nucleus.

The protein resides in the plastid. It is found in the chloroplast thylakoid membrane. The catalysed reaction is a plastoquinone + NADH + (n+1) H(+)(in) = a plastoquinol + NAD(+) + n H(+)(out). It carries out the reaction a plastoquinone + NADPH + (n+1) H(+)(in) = a plastoquinol + NADP(+) + n H(+)(out). Functionally, NDH shuttles electrons from NAD(P)H:plastoquinone, via FMN and iron-sulfur (Fe-S) centers, to quinones in the photosynthetic chain and possibly in a chloroplast respiratory chain. The immediate electron acceptor for the enzyme in this species is believed to be plastoquinone. Couples the redox reaction to proton translocation, and thus conserves the redox energy in a proton gradient. The polypeptide is NAD(P)H-quinone oxidoreductase subunit H, chloroplastic (Hordeum vulgare (Barley)).